A 343-amino-acid chain; its full sequence is Serine/threonine-protein kinase SRK2C (343 aa).

In terms of domain architecture, Protein kinase spans 4-260; sequence YEIVKDIGSG…IEEIKNHSWF (257 aa). ATP contacts are provided by residues 10–18 and K33; that span reads IGSGNFGVA. D123 serves as the catalytic Proton acceptor. A Phosphothreonine modification is found at T158.

Belongs to the protein kinase superfamily. Ser/Thr protein kinase family. Interacts with I-2 and TOPP1. In terms of tissue distribution, expressed in seedlings.

The catalysed reaction is L-seryl-[protein] + ATP = O-phospho-L-seryl-[protein] + ADP + H(+). It catalyses the reaction L-threonyl-[protein] + ATP = O-phospho-L-threonyl-[protein] + ADP + H(+). Involved in gene regulation and confers tolerance to drought and osmotic stress. In Arabidopsis thaliana (Mouse-ear cress), this protein is Serine/threonine-protein kinase SRK2C (SRK2C).